The chain runs to 927 residues: Sodium/calcium exchanger 3 (927 aa).

The N-terminal stretch at 1–30 is a signal peptide; sequence MAWLRLQPLTSAFLHFGLVTFVLFLNGLRA. Over 31–73 the chain is Extracellular; it reads EAGGSGDVPSTGQNNESCSGSSDCKEGVILPIWYPENPSLGDK. Residue Asn-45 is glycosylated (N-linked (GlcNAc...) asparagine). The helical transmembrane segment at 74–94 threads the bilayer; it reads IARVIVYFVALIYMFLGVSII. Residues 95-147 lie on the Cytoplasmic side of the membrane; sequence ADRFMASIEVITSQEREVTIKKPNGETSTTTIRVWNETVSNLTLMALGSSAPE. Residues 140-180 form an Alpha-1 repeat; the sequence is ALGSSAPEILLSLIEVCGHGFIAGDLGPSTIVGSAAFNMFI. Residues 148 to 168 form a helical membrane-spanning segment; it reads ILLSLIEVCGHGFIAGDLGPS. Thr-169 is a topological domain (extracellular). The helical transmembrane segment at 170–190 threads the bilayer; the sequence is IVGSAAFNMFIIIGICVYVIP. Over 191–202 the chain is Cytoplasmic; that stretch reads DGETRKIKHLRV. A helical membrane pass occupies residues 203-223; it reads FFITAAWSIFAYIWLYMILAV. Over 224-230 the chain is Extracellular; the sequence is FSPGVVQ. Residues 231-251 form a helical membrane-spanning segment; the sequence is VWEGLLTLFFFPVCVLLAWVA. The Cytoplasmic segment spans residues 252 to 726; the sequence is DKRLLFYKYM…DESGEERLPS (475 aa). The segment at 253–272 is putative calmodulin-binding region; the sequence is KRLLFYKYMHKKYRTDKHRG. Calx-beta domains are found at residues 386–485 and 519–619; these read VHTD…VRLS and ATVT…IALG. Residues Glu-409, Asp-445, Asp-470, Asp-471, Ile-473, Glu-475, Glu-478, Asp-525, Asp-526, Asp-527, Glu-543, Asp-579, Glu-606, Glu-607, and Glu-672 each contribute to the Ca(2+) site. A helical membrane pass occupies residues 727-747; sequence CFDYVMHFLTVFWKVLFACVP. Over 748-754 the chain is Extracellular; the sequence is PTEYCHG. Residues 755–775 traverse the membrane as a helical segment; it reads WACFAVSILIIGMLTAIIGDL. At 776–778 the chain is on the cytoplasmic side; it reads ASH. The helical transmembrane segment at 779 to 799 threads the bilayer; it reads FGCTIGLKDSVTAVVFVAFGT. The stretch at 796–832 is one Alpha-2 repeat; that stretch reads AFGTSVPDTFASKAAALQDVYADASIGNVTGSNAVNV. The Extracellular segment spans residues 800–828; the sequence is SVPDTFASKAAALQDVYADASIGNVTGSN. Asn-823 carries N-linked (GlcNAc...) asparagine glycosylation. A helical transmembrane segment spans residues 829–849; sequence AVNVFLGIGLAWSVAAIYWAL. At 850–860 the chain is on the cytoplasmic side; it reads QGQEFHVSAGT. The chain crosses the membrane as a helical span at residues 861–881; it reads LAFSVTLFTIFAFVCISVLLY. The Extracellular portion of the chain corresponds to 882-903; the sequence is RRRPHLGGELGGPRGCKLATTW. A helical transmembrane segment spans residues 904 to 924; it reads LFVSLWLLYILFATLEAYCYI. The Cytoplasmic portion of the chain corresponds to 925–927; the sequence is KGF.

It belongs to the Ca(2+):cation antiporter (CaCA) (TC 2.A.19) family. SLC8 subfamily. Interacts with AKAP1. In terms of tissue distribution, isoform 2 is expressed in brain and skeletal muscle. Isoform 3 is expressed in excitable cells of brain, retina and skeletal muscle. Isoform 4 is expressed in skeletal muscle.

Its subcellular location is the cell membrane. It is found in the perikaryon. The protein localises to the cell projection. The protein resides in the dendrite. It localises to the dendritic spine. Its subcellular location is the sarcolemma. It is found in the cytoplasm. The protein localises to the sarcoplasm. The protein resides in the cell junction. It localises to the mitochondrion outer membrane. Its subcellular location is the perinuclear region. It is found in the endoplasmic reticulum membrane. The catalysed reaction is Ca(2+)(in) + 3 Na(+)(out) = Ca(2+)(out) + 3 Na(+)(in). Calcium transport is down-regulated by Na(+) and stimulated by Ca(2+). Mediates the electrogenic exchange of Ca(2+) against Na(+) ions across the cell membrane, and thereby contributes to the regulation of cytoplasmic Ca(2+) levels and Ca(2+)-dependent cellular processes. Contributes to cellular Ca(2+) homeostasis in excitable cells, both in muscle and in brain. In a first phase, voltage-gated channels mediate the rapid increase of cytoplasmic Ca(2+) levels due to release of Ca(2+) stores from the endoplasmic reticulum. SLC8A3 mediates the export of Ca(2+) from the cell during the next phase, so that cytoplasmic Ca(2+) levels rapidly return to baseline. Contributes to Ca(2+) transport during excitation-contraction coupling in muscle. In neurons, contributes to the rapid decrease of cytoplasmic Ca(2+) levels back to baseline after neuronal activation, and thereby contributes to modulate synaptic plasticity, learning and memory. Required for normal oligodendrocyte differentiation and for normal myelination. Mediates Ca(2+) efflux from mitochondria and contributes to mitochondrial Ca(2+) ion homeostasis. The chain is Sodium/calcium exchanger 3 (SLC8A3) from Homo sapiens (Human).